A 126-amino-acid chain; its full sequence is Protein ApaG (126 aa).

The region spanning 2–126 (NQRLSPIKVE…FSLAVPGLLH (125 aa)) is the ApaG domain.

The polypeptide is Protein ApaG (Shewanella piezotolerans (strain WP3 / JCM 13877)).